Reading from the N-terminus, the 303-residue chain is Glycine--tRNA ligase alpha subunit (303 aa).

Belongs to the class-II aminoacyl-tRNA synthetase family. In terms of assembly, tetramer of two alpha and two beta subunits.

It localises to the cytoplasm. It catalyses the reaction tRNA(Gly) + glycine + ATP = glycyl-tRNA(Gly) + AMP + diphosphate. This is Glycine--tRNA ligase alpha subunit from Methylobacterium radiotolerans (strain ATCC 27329 / DSM 1819 / JCM 2831 / NBRC 15690 / NCIMB 10815 / 0-1).